The chain runs to 83 residues: Short neurotoxin VAN-10 (83 aa).

The first 21 residues, 1-21 (MKTLLLTLVVVTIVCLDLGYT), serve as a signal peptide directing secretion. 4 disulfide bridges follow: cysteine 24–cysteine 45, cysteine 38–cysteine 62, cysteine 64–cysteine 75, and cysteine 76–cysteine 81.

It belongs to the three-finger toxin family. Short-chain subfamily. Type I alpha-neurotoxin sub-subfamily. In terms of tissue distribution, expressed by the venom gland.

Its subcellular location is the secreted. Binds to muscle nicotinic acetylcholine receptor (nAChR) and inhibit acetylcholine from binding to the receptor, thereby impairing neuromuscular transmission. The sequence is that of Short neurotoxin VAN-10 from Laticauda laticaudata (Blue-ringed sea krait).